We begin with the raw amino-acid sequence, 165 residues long: Small ribosomal subunit protein uS5 (165 aa).

The 64-residue stretch at 10–73 (LKEKVVSISR…EDAKKNLVEV (64 aa)) folds into the S5 DRBM domain.

The protein belongs to the universal ribosomal protein uS5 family. In terms of assembly, part of the 30S ribosomal subunit. Contacts proteins S4 and S8.

With S4 and S12 plays an important role in translational accuracy. Its function is as follows. Located at the back of the 30S subunit body where it stabilizes the conformation of the head with respect to the body. The polypeptide is Small ribosomal subunit protein uS5 (Clostridium perfringens (strain ATCC 13124 / DSM 756 / JCM 1290 / NCIMB 6125 / NCTC 8237 / Type A)).